The chain runs to 357 residues: Mannonate dehydratase (357 aa).

This sequence belongs to the mannonate dehydratase family. It depends on Fe(2+) as a cofactor. Mn(2+) is required as a cofactor.

The catalysed reaction is D-mannonate = 2-dehydro-3-deoxy-D-gluconate + H2O. It functions in the pathway carbohydrate metabolism; pentose and glucuronate interconversion. In terms of biological role, catalyzes the dehydration of D-mannonate. This is Mannonate dehydratase from Enterococcus faecalis (strain ATCC 700802 / V583).